Here is a 212-residue protein sequence, read N- to C-terminus: Ribonuclease HII (212 aa).

The 205-residue stretch at 2 to 206 folds into the RNase H type-2 domain; it reads TPLVGVDEAG…CERIRAEAEQ (205 aa). A divalent metal cation contacts are provided by Asp8, Glu9, and Asp101.

Belongs to the RNase HII family. It depends on Mn(2+) as a cofactor. Mg(2+) is required as a cofactor.

It localises to the cytoplasm. It carries out the reaction Endonucleolytic cleavage to 5'-phosphomonoester.. Functionally, endonuclease that specifically degrades the RNA of RNA-DNA hybrids. This chain is Ribonuclease HII, found in Natronomonas pharaonis (strain ATCC 35678 / DSM 2160 / CIP 103997 / JCM 8858 / NBRC 14720 / NCIMB 2260 / Gabara) (Halobacterium pharaonis).